The sequence spans 252 residues: Isoprenyl transferase 2 (252 aa).

Aspartate 26 is an active-site residue. Aspartate 26 serves as a coordination point for Mg(2+). Substrate-binding positions include 27-30, tryptophan 31, arginine 39, histidine 43, and 71-73; these read GNGR and SSE. The Proton acceptor role is filled by asparagine 74. Residues tryptophan 75, arginine 77, arginine 194, and 200–202 each bind substrate; that span reads RLS. Residue glutamate 213 coordinates Mg(2+).

This sequence belongs to the UPP synthase family. Homodimer. Requires Mg(2+) as cofactor.

Its function is as follows. Catalyzes the condensation of isopentenyl diphosphate (IPP) with allylic pyrophosphates generating different type of terpenoids. In Bradyrhizobium diazoefficiens (strain JCM 10833 / BCRC 13528 / IAM 13628 / NBRC 14792 / USDA 110), this protein is Isoprenyl transferase 2.